The chain runs to 439 residues: Agmatine coumaroyltransferase-1 (439 aa).

Residues His152 and Asp385 each act as proton acceptor in the active site.

The protein belongs to the plant acyltransferase family. In terms of assembly, monomer.

It carries out the reaction 4-coumaroyl-CoA + agmatine = N-(4-guanidinobutyl)-4-hydroxycinnamamide + CoA + H(+). Inhibited by DEPC. Completely inhibited by ZnSO(4), strongly inhibited by CuSO(4), partially inhibited by MnCl(2). Unaffected by MgCl(2) or CaCl(2). In terms of biological role, involved in the synthesis of hordatines (antifungal hydroxycinnamoylagmatine derivatives). Specific for agmatine as the acyl acceptor, inactive towards tyramine and putrescine. Has activity with the acyl donors 4-coumaroyl-CoA, cinnamoyl-CoA, caffeoyl-CoA, feruloyl-CoA, and to a lesser extent sinapoyl-CoA. The sequence is that of Agmatine coumaroyltransferase-1 (ACT-1) from Hordeum vulgare (Barley).